We begin with the raw amino-acid sequence, 111 residues long: Probable 4-amino-4-deoxy-L-arabinose-phosphoundecaprenol flippase subunit ArnE (111 aa).

The next 3 membrane-spanning stretches (helical) occupy residues leucine 38–leucine 58, leucine 61–alanine 81, and proline 91–alanine 111. The EamA domain occupies leucine 40 to serine 109.

The protein belongs to the ArnE family. As to quaternary structure, heterodimer of ArnE and ArnF.

Its subcellular location is the cell inner membrane. It participates in bacterial outer membrane biogenesis; lipopolysaccharide biosynthesis. In terms of biological role, translocates 4-amino-4-deoxy-L-arabinose-phosphoundecaprenol (alpha-L-Ara4N-phosphoundecaprenol) from the cytoplasmic to the periplasmic side of the inner membrane. This chain is Probable 4-amino-4-deoxy-L-arabinose-phosphoundecaprenol flippase subunit ArnE, found in Salmonella enteritidis PT4 (strain P125109).